Consider the following 476-residue polypeptide: Cytochrome c oxidase subunit 1 (476 aa).

A helical membrane pass occupies residues 19–39; it reads LYYLWFSFLFGTYGFLLSVIL. A Ca(2+)-binding site is contributed by glutamate 42. 8 consecutive transmembrane segments (helical) span residues 61–81, 105–125, 144–164, 194–214, 240–260, 278–298, 309–329, and 345–365; these read MIFT…GLFG, ISLL…AAEF, LSPV…IASI, IIIT…GVLM, LFWF…FGVI, MILA…HHMY, FFTS…FNWL, and LLCL…VILG. Residue histidine 66 coordinates Fe(II)-heme a. Histidine 246 is a binding site for Cu cation. A cross-link (1'-histidyl-3'-tyrosine (His-Tyr)) is located at residues 246-250; sequence HPEVY. Tyrosine 250 is an O2 binding site. The Cu cation site is built by histidine 295 and histidine 296. Residues histidine 374 and aspartate 375 each coordinate Mg(2+). The next 2 membrane-spanning stretches (helical) occupy residues 379 to 399 and 415 to 435; these read VIAH…FTCV and TLIV…FLPM. Histidine 382 contributes to the heme a3 binding site. Histidine 384 contributes to the Fe(II)-heme a binding site. Proline 448 serves as a coordination point for Ca(2+). A helical transmembrane segment spans residues 455–475; that stretch reads NGWNMICSIGSTMTLFGLLIF.

Belongs to the heme-copper respiratory oxidase family. Component of the cytochrome c oxidase (complex IV, CIV), a multisubunit enzyme composed of a catalytic core of 3 subunits and several supernumerary subunits. The complex exists as a monomer or a dimer and forms supercomplexes (SCs) in the inner mitochondrial membrane with ubiquinol-cytochrome c oxidoreductase (cytochrome b-c1 complex, complex III, CIII). Requires heme as cofactor. Cu cation serves as cofactor.

It localises to the mitochondrion inner membrane. The catalysed reaction is 4 Fe(II)-[cytochrome c] + O2 + 8 H(+)(in) = 4 Fe(III)-[cytochrome c] + 2 H2O + 4 H(+)(out). Its pathway is energy metabolism; oxidative phosphorylation. Its function is as follows. Component of the cytochrome c oxidase, the last enzyme in the mitochondrial electron transport chain which drives oxidative phosphorylation. The respiratory chain contains 3 multisubunit complexes succinate dehydrogenase (complex II, CII), ubiquinol-cytochrome c oxidoreductase (cytochrome b-c1 complex, complex III, CIII) and cytochrome c oxidase (complex IV, CIV), that cooperate to transfer electrons derived from NADH and succinate to molecular oxygen, creating an electrochemical gradient over the inner membrane that drives transmembrane transport and the ATP synthase. Cytochrome c oxidase is the component of the respiratory chain that catalyzes the reduction of oxygen to water. Electrons originating from reduced cytochrome c in the intermembrane space (IMS) are transferred via the dinuclear copper A center (CU(A)) of subunit 2 and heme A of subunit 1 to the active site in subunit 1, a binuclear center (BNC) formed by heme A3 and copper B (CU(B)). The BNC reduces molecular oxygen to 2 water molecules using 4 electrons from cytochrome c in the IMS and 4 protons from the mitochondrial matrix. The polypeptide is Cytochrome c oxidase subunit 1 (COI) (Plasmodium berghei).